A 148-amino-acid chain; its full sequence is MGFTEKQEALVNASYEAFKQNLPGNSVLFYSFILEKAPAAKGMFSFLKDFDEVPQNNPSLQAHAEKVFGLVRDSAAQLRATGVVVLADASLGSVHVQKGVLDPHFVVVKEALLKTLKEAGGATWSDEVSNAWEVAYDELSAAIKKAMS.

Positions 2–148 constitute a Globin domain; that stretch reads GFTEKQEALV…LSAAIKKAMS (147 aa). At tyrosine 30 the chain carries Nitrated tyrosine. Residue serine 45 coordinates heme b. Residue serine 45 is modified to Phosphoserine. Residue histidine 63 coordinates O2. Residues lysine 66, histidine 95, and lysine 98 each coordinate heme b. Tyrosine 136 carries the nitrated tyrosine modification.

The protein belongs to the plant globin family. As to quaternary structure, monomer. Post-translationally, nitrated in effective nodules and particularly in hypoxic conditions; this mechanism may play a protective role in the symbiosis by buffering toxic peroxynitrite NO(2)(-). Nitration level decrease during nodule senescence. In terms of processing, phosphorylation at Ser-45 disrupts the molecular environment of its porphyrin ring oxygen binding pocket, thus leading to a reduced oxygen consumption and to the delivery of oxygen O(2) to symbiosomes. As to expression, stem nodules.

Its subcellular location is the cytoplasm. It localises to the cytosol. The protein localises to the nucleus. Functionally, leghemoglobin that reversibly binds oxygen O(2) through a pentacoordinated heme iron. In stem nodules, facilitates the diffusion of oxygen to the bacteroids while preventing the bacterial nitrogenase from being inactivated by buffering dioxygen, nitric oxide and carbon monoxide, and promoting the formation of reactive oxygen species (ROS, e.g. H(2)O(2)). This role is essential for symbiotic nitrogen fixation (SNF). The polypeptide is Leghemoglobin 3 (Sesbania rostrata).